The chain runs to 102 residues: Small ribosomal subunit protein uS10 (102 aa).

The protein belongs to the universal ribosomal protein uS10 family. As to quaternary structure, part of the 30S ribosomal subunit.

Functionally, involved in the binding of tRNA to the ribosomes. This chain is Small ribosomal subunit protein uS10, found in Carboxydothermus hydrogenoformans (strain ATCC BAA-161 / DSM 6008 / Z-2901).